The following is a 71-amino-acid chain: MFFSLPVLTVLIPLVSLTGLLYSASVEEDFPNGCTSTASLCFYSLLLPITLPVYVFFHLWTWMGLKLFRHN.

Residue M1 is a topological domain, cytoplasmic. Residues 2 to 21 (FFSLPVLTVLIPLVSLTGLL) traverse the membrane as a helical segment. Residues 22 to 44 (YSASVEEDFPNGCTSTASLCFYS) are Lumenal-facing. Residues 45–65 (LLLPITLPVYVFFHLWTWMGL) traverse the membrane as a helical segment. At 66-71 (KLFRHN) the chain is on the cytoplasmic side.

As to quaternary structure, component of the glycosylphosphatidylinositol-N-acetylglucosaminyltransferase (GPI-GnT) complex composed at least by PIGA, PIGC, PIGH, PIGP, PIGQ, PIGY and DPM2.

It is found in the endoplasmic reticulum membrane. The protein operates within glycolipid biosynthesis; glycosylphosphatidylinositol-anchor biosynthesis. Its function is as follows. Part of the glycosylphosphatidylinositol-N-acetylglucosaminyltransferase (GPI-GnT) complex that catalyzes the transfer of N-acetylglucosamine from UDP-N-acetylglucosamine to phosphatidylinositol and participates in the first step of GPI biosynthesis. May act by regulating the catalytic subunit PIGA. The sequence is that of Phosphatidylinositol N-acetylglucosaminyltransferase subunit Y from Xenopus tropicalis (Western clawed frog).